The following is a 262-amino-acid chain: Ribosomal RNA small subunit methyltransferase A (262 aa).

The S-adenosyl-L-methionine site is built by Asn14, Leu16, Gly41, Glu62, Asp87, and Asn109.

It belongs to the class I-like SAM-binding methyltransferase superfamily. rRNA adenine N(6)-methyltransferase family. RsmA subfamily.

The protein resides in the cytoplasm. It catalyses the reaction adenosine(1518)/adenosine(1519) in 16S rRNA + 4 S-adenosyl-L-methionine = N(6)-dimethyladenosine(1518)/N(6)-dimethyladenosine(1519) in 16S rRNA + 4 S-adenosyl-L-homocysteine + 4 H(+). Its function is as follows. Specifically dimethylates two adjacent adenosines (A1518 and A1519) in the loop of a conserved hairpin near the 3'-end of 16S rRNA in the 30S particle. May play a critical role in biogenesis of 30S subunits. The polypeptide is Ribosomal RNA small subunit methyltransferase A (Francisella tularensis subsp. holarctica (strain FTNF002-00 / FTA)).